The following is a 154-amino-acid chain: MRFQDLHPQAGSRRRKRRIGRGIAAGQGASGGFGMRGQKSRSGRPTRPGFEGGQNPLYRRLPKLKHFPLVKRKVYTTINVGRLNTLPANSVVTVQSLLEAGILTTAKYPLKVLGDGELNVKLEVHAAAFSGSARSKIEAAGGVCVETSVAADSE.

A disordered region spans residues 1-57 (MRFQDLHPQAGSRRRKRRIGRGIAAGQGASGGFGMRGQKSRSGRPTRPGFEGGQNPL). Over residues 23–35 (IAAGQGASGGFGM) the composition is skewed to gly residues.

Belongs to the universal ribosomal protein uL15 family. As to quaternary structure, part of the 50S ribosomal subunit.

Functionally, binds to the 23S rRNA. The chain is Large ribosomal subunit protein uL15 from Thermosynechococcus vestitus (strain NIES-2133 / IAM M-273 / BP-1).